The sequence spans 173 residues: Photosystem I assembly protein Ycf3 (173 aa).

3 TPR repeats span residues 35 to 68 (AFAY…EEDP), 72 to 105 (SFIL…NPKM), and 120 to 153 (GQRS…APNN).

This sequence belongs to the Ycf3 family.

It localises to the cellular thylakoid membrane. Essential for the assembly of the photosystem I (PSI) complex. May act as a chaperone-like factor to guide the assembly of the PSI subunits. This chain is Photosystem I assembly protein Ycf3, found in Synechococcus elongatus (strain ATCC 33912 / PCC 7942 / FACHB-805) (Anacystis nidulans R2).